The chain runs to 579 residues: Trehalase (579 aa).

The N-terminal stretch at M1 to A15 is a signal peptide. N-linked (GlcNAc...) asparagine glycosylation is found at N29 and N58. Substrate contacts are provided by residues R161, W168–D169, N205, R214–Q216, R279–E281, and G313. N-linked (GlcNAc...) asparagine glycosylation is present at N205. The active-site Proton donor/acceptor is the D315. N331 is a glycosylation site (N-linked (GlcNAc...) asparagine). Residue E513 is the Proton donor/acceptor of the active site. Substrate is bound at residue E528. Residues D560–N569 show a composition bias toward polar residues. The segment at D560 to K579 is disordered.

Belongs to the glycosyl hydrolase 37 family. In terms of tissue distribution, in midgut and Malpighian tubules.

The protein localises to the basolateral cell membrane. The enzyme catalyses alpha,alpha-trehalose + H2O = alpha-D-glucose + beta-D-glucose. In terms of biological role, involved in uptake of hemolymph trehalose into epithelial cells in the midgut of feeding larvae. The sequence is that of Trehalase from Bombyx mori (Silk moth).